Here is a 132-residue protein sequence, read N- to C-terminus: Ribonuclease VapC15 (132 aa).

A PINc domain is found at M1 to R121. D96 serves as a coordination point for Mg(2+). Mn(2+) contacts are provided by D96, D114, and D116.

Belongs to the PINc/VapC protein family. As to quaternary structure, crystallizes as a VapB15-VapC15(2) heterotrimer and as a VapB15(2)-VapC15(2) heterotetramer; each toxin pair forms a homodimer which creates a channel in which the antitoxin binds. Mg(2+) serves as cofactor. It depends on Mn(2+) as a cofactor.

With respect to regulation, RNase activity inhibited by EDTA. In terms of biological role, toxic component of a type II toxin-antitoxin (TA) system. Degrades total E.coli RNA, which is partially inhibited by cognate antitoxin VapB15. Upon expression in M.smegmatis inhibits colony formation, which is neutralized by coexpression with VapB15. In Mycobacterium tuberculosis (strain ATCC 25618 / H37Rv), this protein is Ribonuclease VapC15.